Here is a 332-residue protein sequence, read N- to C-terminus: Cilia- and flagella-associated protein 119 (332 aa).

The segment covering 1-10 (MITPRSSQSL) has biased composition (polar residues). 3 disordered regions span residues 1-70 (MITP…ANLF), 246-271 (EDEE…EAEQ), and 308-332 (RLSN…SKAK). A compositionally biased stretch (basic and acidic residues) spans 14–30 (VQTELEHSPKLQEEPDR). Residues 49 to 58 (ESPAEATSSP) are compositionally biased toward polar residues. A coiled-coil region spans residues 287–308 (LNKELRQLQQLVEERLKESEER).

Specifically expressed in testis (at protein level).

It localises to the cell projection. The protein localises to the cilium. It is found in the flagellum. Its subcellular location is the cytoplasmic vesicle. The protein resides in the secretory vesicle. It localises to the acrosome. The protein localises to the cytoplasm. This is Cilia- and flagella-associated protein 119 from Rattus norvegicus (Rat).